The primary structure comprises 732 residues: Acetophenone carboxylase gamma subunit (732 aa).

Belongs to the HyuA family. As to quaternary structure, acetophenone carboxylase consists of five subunits; a heterooctameric subcomplex of two alpha (Apc1), two beta (Apc2), two gamma (Apc3) and two delta (Apc4) subunits assembles with the epsilon (Apc5) subunit in an unknown stoichiometry. It depends on Mg(2+) as a cofactor. Requires Mn(2+) as cofactor.

The protein localises to the cytoplasm. The enzyme catalyses acetophenone + hydrogencarbonate + 2 ATP + H2O = 3-oxo-3-phenylpropanoate + 2 ADP + 2 phosphate + 2 H(+). Its activity is regulated as follows. Inhibited by zinc ions, carbamoylphosphate and beta,gamma-imido-ATP. Catalyzes the carboxylation of acetophenone to form 3-oxo-3-phenylpropanoate (benzoylacetate) in the anaerobic catabolism of ethylbenzene. Also carboxylates propiophenone at the same rate and 4-acetyl-pyridine at lower rates. In Aromatoleum aromaticum (strain DSM 19018 / LMG 30748 / EbN1) (Azoarcus sp. (strain EbN1)), this protein is Acetophenone carboxylase gamma subunit (apc3).